Reading from the N-terminus, the 448-residue chain is Nicotinate phosphoribosyltransferase pncB1 (448 aa).

A disordered region spans residues 1–21 (MGPPPAARRREGEPDNQDPAG). His-212 is subject to Phosphohistidine. Positions 353 to 372 (RSSYKESPGGRKEALRRSRA) are disordered.

The protein belongs to the NAPRTase family. In terms of processing, transiently phosphorylated on a His residue during the reaction cycle. Phosphorylation strongly increases the affinity for substrates and increases the rate of nicotinate D-ribonucleotide production. Dephosphorylation regenerates the low-affinity form of the enzyme, leading to product release.

The catalysed reaction is nicotinate + 5-phospho-alpha-D-ribose 1-diphosphate + ATP + H2O = nicotinate beta-D-ribonucleotide + ADP + phosphate + diphosphate. It functions in the pathway cofactor biosynthesis; NAD(+) biosynthesis; nicotinate D-ribonucleotide from nicotinate: step 1/1. Involved in the Preiss-Handler pathway, which is a recycling route that permits the salvage of free nicotinamide (NM) and nicotinic acid (Na) involved in the NAD biosynthesis. Catalyzes the synthesis of beta-nicotinate D-ribonucleotide from nicotinate and 5-phospho-D-ribose 1-phosphate at the expense of ATP. It is not able to use nicotinamide. PncB1 contributes to basal NAD level. The polypeptide is Nicotinate phosphoribosyltransferase pncB1 (pncB1) (Mycobacterium tuberculosis (strain CDC 1551 / Oshkosh)).